Reading from the N-terminus, the 209-residue chain is Large ribosomal subunit protein bL25 (209 aa).

The protein belongs to the bacterial ribosomal protein bL25 family. CTC subfamily. Part of the 50S ribosomal subunit; part of the 5S rRNA/L5/L18/L25 subcomplex. Contacts the 5S rRNA. Binds to the 5S rRNA independently of L5 and L18.

Functionally, this is one of the proteins that binds to the 5S RNA in the ribosome where it forms part of the central protuberance. This is Large ribosomal subunit protein bL25 from Xanthomonas campestris pv. campestris (strain 8004).